The chain runs to 532 residues: MQLTLWTYEGPPHIGAMRVATAMSGLHYVLHAPQGDTYADLLFTMIERRDARPPVTYTTFRAQDLGRDTAELFKEAVAAAHARFRPQAMIVGASCTAELIQDDPGGLAKALDLPIPVIPLELPAYQKKENWGASETFYRLVRALAGAPAPRPAREPGRRPLCNILGPTALGFRHRDDLIEIRRLLDTLGIAVNVVAPLGATPADLGRLRDADFNVVLYPETARSAADYLKKAFGQPFTQTIPIGVGGTRRFVEEVAGLAGIDPAPVLDGSGSRLPWYSRSVDSTYLTGKRVFMFGDATHAIGIARVAAKELGFTLVGLGTYGREFAREVRAEAAAHGIEALVTDDYLDVEAAIRAAAPELVLGTQMERHVAKRLGIPCAVISAPVHVQDFPARYAPQMGFEGANVLFDTLVHPLMMGLEEHLLGMFREDPEFHDGVGPSHLGGKSFGTPADEAFEAAERAPADTPPTPAPVPILLERPAATAWSPEAEKELKKIPFFVRGKARTNTETFARERHLPLITLETLYDAKAHYGR.

Aspartate 36 is a binding site for [4Fe-4S] cluster. Aspartate 282 serves as the catalytic Proton donor. Residue 417–418 (GL) participates in substrate binding.

Belongs to the ChlB/BchB/BchZ family. Protochlorophyllide reductase is composed of three subunits; BchL, BchN and BchB. Forms a heterotetramer of two BchB and two BchN subunits. [4Fe-4S] cluster serves as cofactor.

The enzyme catalyses chlorophyllide a + oxidized 2[4Fe-4S]-[ferredoxin] + 2 ADP + 2 phosphate = protochlorophyllide a + reduced 2[4Fe-4S]-[ferredoxin] + 2 ATP + 2 H2O. It participates in porphyrin-containing compound metabolism; bacteriochlorophyll biosynthesis (light-independent). In terms of biological role, component of the dark-operative protochlorophyllide reductase (DPOR) that uses Mg-ATP and reduced ferredoxin to reduce ring D of protochlorophyllide (Pchlide) to form chlorophyllide a (Chlide). This reaction is light-independent. The NB-protein (BchN-BchB) is the catalytic component of the complex. This is Light-independent protochlorophyllide reductase subunit B from Methylobacterium radiotolerans (strain ATCC 27329 / DSM 1819 / JCM 2831 / NBRC 15690 / NCIMB 10815 / 0-1).